We begin with the raw amino-acid sequence, 283 residues long: Extensin (283 aa).

The first 24 residues, 1-24, serve as a signal peptide directing secretion; sequence MMGGKAALLLALVAVTLAVVEIQA. Residues 27-283 are disordered; it reads GYGYGGGYPT…PPPPPPPPYY (257 aa). The span at 36-45 shows a compositional bias: pro residues; it reads TPTPKPPAKG. Residues 46 to 69 are compositionally biased toward basic and acidic residues; it reads PKPEKPPTKGHGHKPEKPPKEHKP. 2 stretches are compositionally biased toward pro residues: residues 70 to 264 and 272 to 283; these read TPPT…PTYT and SSPPPPPPPPYY.

Hydroxylated on proline residues in the S-P-P-P-P repeat. In terms of processing, O-glycosylated on hydroxyprolines.

It is found in the secreted. It localises to the primary cell wall. Functionally, structural component in primary cell wall. The protein is Extensin (HRGP) of Sorghum bicolor (Sorghum).